Consider the following 77-residue polypeptide: Delta-conotoxin GmVIA (77 aa).

The signal sequence occupies residues 1 to 22 (MKLTCMMIVAVLFLTAWTFVTA). The propeptide occupies 23 to 48 (DDSGNGMEILFPKAGHEMENLEVSNR). 3 disulfides stabilise this stretch: cysteine 52/cysteine 67, cysteine 59/cysteine 72, and cysteine 66/cysteine 76.

Belongs to the conotoxin O1 superfamily. Expressed by the venom duct.

It localises to the secreted. Functionally, delta-conotoxins bind to site 6 of voltage-gated sodium channels (Nav) and inhibit the inactivation process. This toxin shows weak activity on rNav1.2/SCN2A (EC(50)=2.5 uM) and rNav1.4/SCN4A (EC(50)=4.8 uM). In vivo, injection of this peptide in the head region of garden snail induces retraction of the head and body into shell. This is followed by secretion of viscous green slime and a convulsive undulation into and out of the shell. No apparent biological activity was observed when a much greater dose of peptide was injected intraperitoneally into mice. The protein is Delta-conotoxin GmVIA of Conus gloriamaris (Glory-of-the-Sea cone).